A 117-amino-acid chain; its full sequence is Inner kinetochore subunit MHF1 (117 aa).

Belongs to the TAF9 family. CENP-S/MHF1 subfamily. The MHF histone-fold complex is a heterotetramer of 2 MHF1-MHF2 heterodimers. Together with MPH1/FANCM, forms the FANCM-MHF complex. Component of the inner kinetochore constitutive centromere-associated network (CCAN).

Functionally, dsDNA-binding component of a FANCM-MHF complex involved in DNA damage repair and genome maintenance. FANCM-MHF promotes gene conversion at blocked replication forks, probably by reversal of the stalled fork. Component of the kinetochore, a multiprotein complex that assembles on centromeric DNA and attaches chromosomes to spindle microtubules, mediating chromosome segregation and sister chromatid segregation during meiosis and mitosis. Component of the inner kinetochore constitutive centromere-associated network (CCAN), which serves as a structural platform for outer kinetochore assembly. This is Inner kinetochore subunit MHF1 from Candida albicans (strain SC5314 / ATCC MYA-2876) (Yeast).